The following is a 123-amino-acid chain: NADH-quinone oxidoreductase subunit A (123 aa).

The next 3 helical transmembrane spans lie at 11–31, 68–88, and 93–113; these read YLPI…IMML, LVAI…PWAI, and IGKI…IGFI.

It belongs to the complex I subunit 3 family. As to quaternary structure, NDH-1 is composed of 14 different subunits. Subunits NuoA, H, J, K, L, M, N constitute the membrane sector of the complex.

The protein localises to the cell inner membrane. It carries out the reaction a quinone + NADH + 5 H(+)(in) = a quinol + NAD(+) + 4 H(+)(out). Functionally, NDH-1 shuttles electrons from NADH, via FMN and iron-sulfur (Fe-S) centers, to quinones in the respiratory chain. The immediate electron acceptor for the enzyme in this species is believed to be ubiquinone. Couples the redox reaction to proton translocation (for every two electrons transferred, four hydrogen ions are translocated across the cytoplasmic membrane), and thus conserves the redox energy in a proton gradient. This chain is NADH-quinone oxidoreductase subunit A, found in Rickettsia typhi (strain ATCC VR-144 / Wilmington).